We begin with the raw amino-acid sequence, 275 residues long: NH(3)-dependent NAD(+) synthetase (275 aa).

Position 46 to 53 (46 to 53) interacts with ATP; sequence GISGGQDS. Residue Asp-52 coordinates Mg(2+). Deamido-NAD(+) is bound at residue Arg-140. Thr-160 contributes to the ATP binding site. Glu-165 contributes to the Mg(2+) binding site. 2 residues coordinate deamido-NAD(+): Lys-173 and Asp-180. ATP-binding residues include Lys-189 and Thr-211. Deamido-NAD(+) is bound at residue 260 to 261; sequence HK.

The protein belongs to the NAD synthetase family. As to quaternary structure, homodimer.

The enzyme catalyses deamido-NAD(+) + NH4(+) + ATP = AMP + diphosphate + NAD(+) + H(+). Its pathway is cofactor biosynthesis; NAD(+) biosynthesis; NAD(+) from deamido-NAD(+) (ammonia route): step 1/1. Catalyzes the ATP-dependent amidation of deamido-NAD to form NAD. Uses ammonia as a nitrogen source. This chain is NH(3)-dependent NAD(+) synthetase, found in Cronobacter sakazakii (strain ATCC BAA-894) (Enterobacter sakazakii).